A 328-amino-acid chain; its full sequence is Ketol-acid reductoisomerase (NADP(+)) (328 aa).

A KARI N-terminal Rossmann domain is found at 2-182 (AKIYTDREAS…GATRAGVIET (181 aa)). NADP(+)-binding positions include 25-28 (YGIQ), arginine 48, serine 53, and 83-86 (DMEQ). Histidine 108 is an active-site residue. Glycine 134 contacts NADP(+). The KARI C-terminal knotted domain maps to 183–328 (TFAEETETDL…EEMRKLLFGP (146 aa)). Positions 191, 195, 227, and 231 each coordinate Mg(2+). Serine 252 lines the substrate pocket.

It belongs to the ketol-acid reductoisomerase family. Mg(2+) serves as cofactor.

The enzyme catalyses (2R)-2,3-dihydroxy-3-methylbutanoate + NADP(+) = (2S)-2-acetolactate + NADPH + H(+). It carries out the reaction (2R,3R)-2,3-dihydroxy-3-methylpentanoate + NADP(+) = (S)-2-ethyl-2-hydroxy-3-oxobutanoate + NADPH + H(+). The protein operates within amino-acid biosynthesis; L-isoleucine biosynthesis; L-isoleucine from 2-oxobutanoate: step 2/4. It functions in the pathway amino-acid biosynthesis; L-valine biosynthesis; L-valine from pyruvate: step 2/4. Its function is as follows. Involved in the biosynthesis of branched-chain amino acids (BCAA). Catalyzes an alkyl-migration followed by a ketol-acid reduction of (S)-2-acetolactate (S2AL) to yield (R)-2,3-dihydroxy-isovalerate. In the isomerase reaction, S2AL is rearranged via a Mg-dependent methyl migration to produce 3-hydroxy-3-methyl-2-ketobutyrate (HMKB). In the reductase reaction, this 2-ketoacid undergoes a metal-dependent reduction by NADPH to yield (R)-2,3-dihydroxy-isovalerate. This is Ketol-acid reductoisomerase (NADP(+)) from Pyrobaculum aerophilum (strain ATCC 51768 / DSM 7523 / JCM 9630 / CIP 104966 / NBRC 100827 / IM2).